The chain runs to 36 residues: Photosystem I reaction center subunit VIII (36 aa).

A helical membrane pass occupies residues 9–29; sequence ILVPLVGLIFPALSMALLFIY.

The protein belongs to the PsaI family.

It localises to the plastid. The protein resides in the chloroplast thylakoid membrane. Functionally, may help in the organization of the PsaL subunit. This chain is Photosystem I reaction center subunit VIII, found in Pyropia yezoensis (Susabi-nori).